A 56-amino-acid chain; its full sequence is MPMPVLIFLIGYLPFFLAAYWIYDMESVRKQAITAGAILSFDAAMLAIFGGILGWI.

The next 2 helical transmembrane spans lie at 5–23 (VLIF…YWIY) and 33–55 (ITAG…ILGW).

Its subcellular location is the cell membrane. This is an uncharacterized protein from Archaeoglobus fulgidus (strain ATCC 49558 / DSM 4304 / JCM 9628 / NBRC 100126 / VC-16).